We begin with the raw amino-acid sequence, 440 residues long: Phenylacetate-coenzyme A ligase (440 aa).

This sequence belongs to the phenylacetyl-CoA ligase family. Monomer.

It carries out the reaction 2-phenylacetate + ATP + CoA = phenylacetyl-CoA + AMP + diphosphate. Its pathway is aromatic compound metabolism; phenylacetate degradation. Inhibition of activity is observed in the presence of a 1 mM of the divalent cations zinc, copper, and nickel. Catalyzes the activation of phenylacetic acid (PA) to phenylacetyl-CoA (PA-CoA). Involved in the phenylalanine metabolism. The sequence is that of Phenylacetate-coenzyme A ligase (paaK) from Aromatoleum evansii (Azoarcus evansii).